Consider the following 140-residue polypeptide: UPF0102 protein Ppro_1186 (140 aa).

Positions 1–27 (MKRPGDGRQESPSSTARPDNRNTGSRG) are disordered. The span at 10-25 (ESPSSTARPDNRNTGS) shows a compositional bias: polar residues.

Belongs to the UPF0102 family.

This Pelobacter propionicus (strain DSM 2379 / NBRC 103807 / OttBd1) protein is UPF0102 protein Ppro_1186.